The primary structure comprises 157 residues: SsrA-binding protein (157 aa).

The segment at 135 to 157 is disordered; sequence KRDTIKDREGKREVERAMKTNHR.

Belongs to the SmpB family.

Its subcellular location is the cytoplasm. Required for rescue of stalled ribosomes mediated by trans-translation. Binds to transfer-messenger RNA (tmRNA), required for stable association of tmRNA with ribosomes. tmRNA and SmpB together mimic tRNA shape, replacing the anticodon stem-loop with SmpB. tmRNA is encoded by the ssrA gene; the 2 termini fold to resemble tRNA(Ala) and it encodes a 'tag peptide', a short internal open reading frame. During trans-translation Ala-aminoacylated tmRNA acts like a tRNA, entering the A-site of stalled ribosomes, displacing the stalled mRNA. The ribosome then switches to translate the ORF on the tmRNA; the nascent peptide is terminated with the 'tag peptide' encoded by the tmRNA and targeted for degradation. The ribosome is freed to recommence translation, which seems to be the essential function of trans-translation. This chain is SsrA-binding protein, found in Albidiferax ferrireducens (strain ATCC BAA-621 / DSM 15236 / T118) (Rhodoferax ferrireducens).